A 174-amino-acid chain; its full sequence is 3-hydroxydecanoyl-[acyl-carrier-protein] dehydratase (174 aa).

Residue His73 is part of the active site.

The protein belongs to the thioester dehydratase family. FabA subfamily. As to quaternary structure, homodimer.

The protein localises to the cytoplasm. The catalysed reaction is a (3R)-hydroxyacyl-[ACP] = a (2E)-enoyl-[ACP] + H2O. The enzyme catalyses (3R)-hydroxydecanoyl-[ACP] = (2E)-decenoyl-[ACP] + H2O. It carries out the reaction (2E)-decenoyl-[ACP] = (3Z)-decenoyl-[ACP]. It functions in the pathway lipid metabolism; fatty acid biosynthesis. Its function is as follows. Necessary for the introduction of cis unsaturation into fatty acids. Catalyzes the dehydration of (3R)-3-hydroxydecanoyl-ACP to E-(2)-decenoyl-ACP and then its isomerization to Z-(3)-decenoyl-ACP. Can catalyze the dehydratase reaction for beta-hydroxyacyl-ACPs with saturated chain lengths up to 16:0, being most active on intermediate chain length. The chain is 3-hydroxydecanoyl-[acyl-carrier-protein] dehydratase from Teredinibacter turnerae (strain ATCC 39867 / T7901).